Reading from the N-terminus, the 146-residue chain is Putative actin-depolymerizing factor 8 (146 aa).

In terms of domain architecture, ADF-H spans Pro14–Asn144.

The protein belongs to the actin-binding proteins ADF family.

Actin-depolymerizing protein. Severs actin filaments (F-actin) and binds to actin monomers. The protein is Putative actin-depolymerizing factor 8 (ADF8) of Oryza sativa subsp. japonica (Rice).